Consider the following 257-residue polypeptide: Triosephosphate isomerase (257 aa).

Residues asparagine 11 and lysine 13 each coordinate substrate. The active-site Electrophile is the histidine 96. Glutamate 170 functions as the Proton acceptor in the catalytic mechanism.

Belongs to the triosephosphate isomerase family. In terms of assembly, homodimer.

The protein localises to the cytoplasm. It carries out the reaction D-glyceraldehyde 3-phosphate = dihydroxyacetone phosphate. It catalyses the reaction dihydroxyacetone phosphate = methylglyoxal + phosphate. It participates in carbohydrate biosynthesis; gluconeogenesis. The protein operates within carbohydrate degradation; glycolysis; D-glyceraldehyde 3-phosphate from glycerone phosphate: step 1/1. Triosephosphate isomerase is an extremely efficient metabolic enzyme that catalyzes the interconversion between dihydroxyacetone phosphate (DHAP) and D-glyceraldehyde-3-phosphate (G3P) in glycolysis and gluconeogenesis. In terms of biological role, it is also responsible for the non-negligible production of methylglyoxal a reactive cytotoxic side-product that modifies and can alter proteins, DNA and lipids. The protein is Triosephosphate isomerase of Giardia intestinalis (Giardia lamblia).